We begin with the raw amino-acid sequence, 337 residues long: Thymidylate synthase (337 aa).

DUMP is bound by residues arginine 74 and 199-200 (RR). The Nucleophile role is filled by cysteine 219. DUMP-binding positions include 239–242 (RSGD), asparagine 250, and 280–282 (HIY). A (6R)-5,10-methylene-5,6,7,8-tetrahydrofolate-binding site is contributed by aspartate 242. (6R)-5,10-methylene-5,6,7,8-tetrahydrofolate is bound at residue alanine 336.

This sequence belongs to the thymidylate synthase family. As to quaternary structure, homodimer.

The enzyme catalyses dUMP + (6R)-5,10-methylene-5,6,7,8-tetrahydrofolate = 7,8-dihydrofolate + dTMP. Its pathway is pyrimidine metabolism; dTTP biosynthesis. In Homo sapiens (Human), this protein is Thymidylate synthase (70).